The following is a 256-amino-acid chain: MLTLANHTFSSRLLTGTGKFSNATTMKSAVSAAQSNIVTLAMKRVASNNAQDETLKALRELGVTLLPNTSGAKNAQEAVFAAELSYEALGSQWVKLEIHPDQRYLLPDPIETLRAAETLVKKGFNVLPYCGADPVLCKRLEDVGCAAVMPLGAPIGSNQGLQTAPFLKIIVEQASIPVIVDAGIGKPSEAMAVMEMGVDAVLVNTAIATARNPVAMAKAFASAVETGRCAFEAGLGATSNVALASSPLTAFLEPTV.

Residue Lys-95 is the Schiff-base intermediate with DXP of the active site. 1-deoxy-D-xylulose 5-phosphate is bound by residues Gly-156, 182–183 (AG), and 204–205 (NT).

This sequence belongs to the ThiG family. In terms of assembly, homotetramer. Forms heterodimers with either ThiH or ThiS.

It localises to the cytoplasm. The catalysed reaction is [ThiS sulfur-carrier protein]-C-terminal-Gly-aminoethanethioate + 2-iminoacetate + 1-deoxy-D-xylulose 5-phosphate = [ThiS sulfur-carrier protein]-C-terminal Gly-Gly + 2-[(2R,5Z)-2-carboxy-4-methylthiazol-5(2H)-ylidene]ethyl phosphate + 2 H2O + H(+). The protein operates within cofactor biosynthesis; thiamine diphosphate biosynthesis. Its function is as follows. Catalyzes the rearrangement of 1-deoxy-D-xylulose 5-phosphate (DXP) to produce the thiazole phosphate moiety of thiamine. Sulfur is provided by the thiocarboxylate moiety of the carrier protein ThiS. In vitro, sulfur can be provided by H(2)S. The chain is Thiazole synthase from Alteromonas mediterranea (strain DSM 17117 / CIP 110805 / LMG 28347 / Deep ecotype).